We begin with the raw amino-acid sequence, 60 residues long: Large ribosomal subunit protein bL32 (60 aa).

The protein belongs to the bacterial ribosomal protein bL32 family.

The protein is Large ribosomal subunit protein bL32 of Paramagnetospirillum magneticum (strain ATCC 700264 / AMB-1) (Magnetospirillum magneticum).